A 368-amino-acid chain; its full sequence is Histidinol-phosphate aminotransferase (368 aa).

Lysine 223 is modified (N6-(pyridoxal phosphate)lysine).

Belongs to the class-II pyridoxal-phosphate-dependent aminotransferase family. Histidinol-phosphate aminotransferase subfamily. As to quaternary structure, homodimer. It depends on pyridoxal 5'-phosphate as a cofactor.

The enzyme catalyses L-histidinol phosphate + 2-oxoglutarate = 3-(imidazol-4-yl)-2-oxopropyl phosphate + L-glutamate. It functions in the pathway amino-acid biosynthesis; L-histidine biosynthesis; L-histidine from 5-phospho-alpha-D-ribose 1-diphosphate: step 7/9. The chain is Histidinol-phosphate aminotransferase (hisC) from Sinorhizobium fredii (strain NBRC 101917 / NGR234).